The following is a 333-amino-acid chain: O-acetyl transferase (333 aa).

It belongs to the acyltransferase 3 family.

The protein localises to the host cell inner membrane. Its function is as follows. Antigenically converts S.flexneri serotype X to 3a, Y to 3b, 1a to 1b and 4a to 4b by O-acetylating the O-antigenic polysaccharide chain. The sequence is that of O-acetyl transferase (OAC) from Shigella flexneri (Shigella flexneri bacteriophage VI).